The following is a 365-amino-acid chain: Fructose-1,6-bisphosphatase class 1 2 (365 aa).

Glu100, Asp122, Leu124, and Asp125 together coordinate Mg(2+). Substrate is bound by residues Asp125–Ser128 and Asn221. Glu293 lines the Mg(2+) pocket.

It belongs to the FBPase class 1 family. In terms of assembly, homotetramer. Mg(2+) is required as a cofactor.

The protein resides in the cytoplasm. The catalysed reaction is beta-D-fructose 1,6-bisphosphate + H2O = beta-D-fructose 6-phosphate + phosphate. The protein operates within carbohydrate biosynthesis; gluconeogenesis. The sequence is that of Fructose-1,6-bisphosphatase class 1 2 from Cupriavidus metallidurans (strain ATCC 43123 / DSM 2839 / NBRC 102507 / CH34) (Ralstonia metallidurans).